The following is a 528-amino-acid chain: Lanosterol 14-alpha demethylase (528 aa).

Residues 15 to 37 form a helical membrane-spanning segment; that stretch reads LSLSVTQQISILLGVPFVYNLVW. Residue Tyr-64 participates in oteseconazole binding. Position 118 (Tyr-118) interacts with itraconazole. Gly-307 contributes to the posaconazole binding site. His-377 is an oteseconazole binding site. Cys-470 is a heme binding site.

It belongs to the cytochrome P450 family. Heme serves as cofactor.

The protein resides in the endoplasmic reticulum membrane. It carries out the reaction a 14alpha-methyl steroid + 3 reduced [NADPH--hemoprotein reductase] + 3 O2 = a Delta(14) steroid + formate + 3 oxidized [NADPH--hemoprotein reductase] + 4 H2O + 4 H(+). The catalysed reaction is a 14alpha-methyl steroid + reduced [NADPH--hemoprotein reductase] + O2 = a 14alpha-hydroxymethyl steroid + oxidized [NADPH--hemoprotein reductase] + H2O + H(+). The enzyme catalyses a 14alpha-hydroxymethyl steroid + reduced [NADPH--hemoprotein reductase] + O2 = a 14alpha-formyl steroid + oxidized [NADPH--hemoprotein reductase] + 2 H2O + H(+). It catalyses the reaction a 14alpha-formyl steroid + reduced [NADPH--hemoprotein reductase] + O2 = a Delta(14) steroid + formate + oxidized [NADPH--hemoprotein reductase] + H2O + 2 H(+). It carries out the reaction lanosterol + 3 reduced [NADPH--hemoprotein reductase] + 3 O2 = 4,4-dimethyl-5alpha-cholesta-8,14,24-trien-3beta-ol + formate + 3 oxidized [NADPH--hemoprotein reductase] + 4 H2O + 4 H(+). The catalysed reaction is lanosterol + reduced [NADPH--hemoprotein reductase] + O2 = 32-hydroxylanosterol + oxidized [NADPH--hemoprotein reductase] + H2O + H(+). The enzyme catalyses 32-hydroxylanosterol + reduced [NADPH--hemoprotein reductase] + O2 = 32-oxolanosterol + oxidized [NADPH--hemoprotein reductase] + 2 H2O + H(+). It catalyses the reaction 32-oxolanosterol + reduced [NADPH--hemoprotein reductase] + O2 = 4,4-dimethyl-5alpha-cholesta-8,14,24-trien-3beta-ol + formate + oxidized [NADPH--hemoprotein reductase] + H2O + 2 H(+). It carries out the reaction eburicol + 3 reduced [NADPH--hemoprotein reductase] + 3 O2 = 14-demethyleburicol + formate + 3 oxidized [NADPH--hemoprotein reductase] + 4 H2O + 4 H(+). The catalysed reaction is eburicol + reduced [NADPH--hemoprotein reductase] + O2 = 32-hydroxyeburicol + oxidized [NADPH--hemoprotein reductase] + H2O + H(+). The enzyme catalyses 32-hydroxyeburicol + reduced [NADPH--hemoprotein reductase] + O2 = 32-oxoeburicol + oxidized [NADPH--hemoprotein reductase] + 2 H2O + H(+). It catalyses the reaction 32-oxoeburicol + reduced [NADPH--hemoprotein reductase] + O2 = 14-demethyleburicol + formate + oxidized [NADPH--hemoprotein reductase] + H2O + 2 H(+). Its pathway is steroid biosynthesis; zymosterol biosynthesis; zymosterol from lanosterol: step 1/6. Its activity is regulated as follows. The catalytic activity is inhibited by the binding of azoles clotrimazole, miconazole, fluconazole, ketoconazole, oteseconazole (VT-1161), tetraconazole, the triazole SCH39304, and the triazole derivative ICI 153066. Its function is as follows. Sterol 14alpha-demethylase that plays a critical role in the third module of ergosterol biosynthesis pathway, being ergosterol the major sterol component in fungal membranes that participates in a variety of functions. The third module or late pathway involves the ergosterol synthesis itself through consecutive reactions that mainly occur in the endoplasmic reticulum (ER) membrane. In filamentous fungi, during the initial step of this module, lanosterol (lanosta-8,24-dien-3beta-ol) can be metabolized to eburicol. Sterol 14alpha-demethylase catalyzes the three-step oxidative removal of the 14alpha-methyl group (C-32) of both these sterols in the form of formate, and converts eburicol and lanosterol to 14-demethyleburicol (4,4,24-trimethylergosta-8,14,24(28)-trienol) and 4,4-dimethyl-5alpha-cholesta-8,14,24-trien-3beta-ol, respectively, which are further metabolized by other enzymes in the pathway to ergosterol. Can also use substrates not intrinsic to fungi, such as 24,25-dihydrolanosterol (DHL), producing 4,4-dimethyl-8,14-cholestadien-3-beta-ol, but at lower rates than the endogenous substrates. The protein is Lanosterol 14-alpha demethylase of Candida albicans (strain SC5314 / ATCC MYA-2876) (Yeast).